Here is a 339-residue protein sequence, read N- to C-terminus: tRNA dimethylallyltransferase (339 aa).

ATP is bound at residue 36 to 43 (GPTGSGKT). 38–43 (TGSGKT) serves as a coordination point for substrate. Residues 61–64 (DSMQ) form an interaction with substrate tRNA region.

This sequence belongs to the IPP transferase family. Monomer. Mg(2+) serves as cofactor.

The enzyme catalyses adenosine(37) in tRNA + dimethylallyl diphosphate = N(6)-dimethylallyladenosine(37) in tRNA + diphosphate. Functionally, catalyzes the transfer of a dimethylallyl group onto the adenine at position 37 in tRNAs that read codons beginning with uridine, leading to the formation of N6-(dimethylallyl)adenosine (i(6)A). In Chlamydia trachomatis serovar A (strain ATCC VR-571B / DSM 19440 / HAR-13), this protein is tRNA dimethylallyltransferase.